A 973-amino-acid chain; its full sequence is UvrABC system protein A (973 aa).

34 to 41 (GLSGSGKS) provides a ligand contact to ATP. ABC transporter domains follow at residues 331 to 609 (WAKS…PKSL) and 629 to 958 (PKKK…QFLK). Residue 662 to 669 (GVSGGGKS) participates in ATP binding. A C4-type zinc finger spans residues 761–787 (CEACQGDGVIKIEMHFLPDVYVTCDVC).

Belongs to the ABC transporter superfamily. UvrA family. In terms of assembly, forms a heterotetramer with UvrB during the search for lesions.

It localises to the cytoplasm. The UvrABC repair system catalyzes the recognition and processing of DNA lesions. UvrA is an ATPase and a DNA-binding protein. A damage recognition complex composed of 2 UvrA and 2 UvrB subunits scans DNA for abnormalities. When the presence of a lesion has been verified by UvrB, the UvrA molecules dissociate. This Rhizobium meliloti (strain 1021) (Ensifer meliloti) protein is UvrABC system protein A.